The chain runs to 1251 residues: Botulinum neurotoxin type E (1251 aa).

A Zn(2+)-binding site is contributed by His-212. Glu-213 is a catalytic residue. Zn(2+) is bound by residues His-216 and Glu-251. Cys-412 and Cys-426 form a disulfide bridge. The segment at 423–819 (KSICIEINNG…ELNSMVIDTL (397 aa)) is translocation domain (TD). Positions 466-515 (NDLDQVILNFNSESAPGLSDEKLNLTIQNDAYIPKYDSNGTSDIEQHDVN) are belt. Residues 845–1067 (KRIKSSSVLN…EIQTLYNNEP (223 aa)) form an N-terminus of receptor binding domain (N-RBD) region. Residues 1068–1251 (NANILKDFWG…ISEEHGWQEK (184 aa)) form a C-terminus of receptor binding domain (C-RBD) region. The Host ganglioside-binding motif motif lies at 1221 to 1224 (STWY).

This sequence belongs to the peptidase M27 family. As to quaternary structure, heterodimer; disulfide-linked heterodimer of a light chain (LC) and a heavy chain (HC). The LC has the proteolytic/pharmacological activity, while the N- and C-terminal of the HC mediate channel formation and toxin binding, respectively. Interacts with host synaptic vesicle glycoproteins SV2A and SV2B which probably serve as coreceptors. Zn(2+) is required as a cofactor.

Its subcellular location is the secreted. The protein localises to the host cytoplasm. The protein resides in the host cytosol. It is found in the host synapse. It localises to the host presynaptic cell membrane. Its subcellular location is the host cytoplasmic vesicle. The protein localises to the host secretory vesicle. The protein resides in the host synaptic vesicle membrane. The enzyme catalyses Limited hydrolysis of proteins of the neuroexocytosis apparatus, synaptobrevins, SNAP25 or syntaxin. No detected action on small molecule substrates.. In terms of biological role, botulinum toxin causes flaccid paralysis by inhibiting neurotransmitter (acetylcholine) release from the presynaptic membranes of nerve terminals of eukaryotic host skeletal and autonomic nervous system, with frequent heart or respiratory failure. Precursor of botulinum neurotoxin E which has 2 coreceptors; complex polysialylated gangliosides found on neural tissue and specific membrane-anchored proteins found in synaptic vesicles. Receptor proteins are exposed on host presynaptic cell membrane during neurotransmitter release, when the toxin heavy chain (HC) binds to them. Upon synaptic vesicle recycling the toxin is taken up via the endocytic pathway. When the pH of the toxin-containing endosome drops a structural rearrangement occurs so that the N-terminus of the HC forms pores that allows the light chain (LC) to translocate into the cytosol. Once in the cytosol the disulfide bond linking the 2 subunits is reduced and LC cleaves its target protein on synaptic vesicles, preventing their fusion with the cytoplasmic membrane and thus neurotransmitter release. Functionally, has proteolytic activity. After translocation into the eukaryotic host cytosol, LC hydrolyzes the '180-Arg-|-Ile-181' bond in SNAP25, blocking neurotransmitter release. Responsible for host epithelial cell transcytosis, host nerve cell targeting and translocation of light chain (LC) into host cytosol. Composed of 3 subdomains; the translocation domain (TD), and N-terminus and C-terminus of the receptor-binding domain (RBD). The RBD is responsible for the adherence of the toxin to the cell surface. It simultaneously recognizes 2 coreceptors; host polysialated gangliosides and the receptor proteins SV2A and SV2B in close proximity on host synaptic vesicles. Interaction with SV2 proteins requires SV2 glycosylation. The N-terminus of the TD wraps an extended belt around the perimeter of the LC, protecting Zn(2+) in the active site; it may also prevent premature LC dissociation from the translocation channel and protect toxin prior to translocation. The TD inserts into synaptic vesicle membrane to allow translocation into the host cytosol. Binds ganglioside GD1a in vitro. In Clostridium butyricum, this protein is Botulinum neurotoxin type E.